The chain runs to 212 residues: Thiamine-phosphate synthase (212 aa).

4-amino-2-methyl-5-(diphosphooxymethyl)pyrimidine-binding positions include 39–43 (QLRIK) and Asn-71. The Mg(2+) site is built by Asp-72 and Asp-91. 4-amino-2-methyl-5-(diphosphooxymethyl)pyrimidine is bound at residue Ser-110. 136–138 (TQT) provides a ligand contact to 2-[(2R,5Z)-2-carboxy-4-methylthiazol-5(2H)-ylidene]ethyl phosphate. Position 139 (Lys-139) interacts with 4-amino-2-methyl-5-(diphosphooxymethyl)pyrimidine. 2-[(2R,5Z)-2-carboxy-4-methylthiazol-5(2H)-ylidene]ethyl phosphate is bound by residues Gly-168 and 188 to 189 (VS).

It belongs to the thiamine-phosphate synthase family. Mg(2+) serves as cofactor.

It carries out the reaction 2-[(2R,5Z)-2-carboxy-4-methylthiazol-5(2H)-ylidene]ethyl phosphate + 4-amino-2-methyl-5-(diphosphooxymethyl)pyrimidine + 2 H(+) = thiamine phosphate + CO2 + diphosphate. The catalysed reaction is 2-(2-carboxy-4-methylthiazol-5-yl)ethyl phosphate + 4-amino-2-methyl-5-(diphosphooxymethyl)pyrimidine + 2 H(+) = thiamine phosphate + CO2 + diphosphate. The enzyme catalyses 4-methyl-5-(2-phosphooxyethyl)-thiazole + 4-amino-2-methyl-5-(diphosphooxymethyl)pyrimidine + H(+) = thiamine phosphate + diphosphate. It functions in the pathway cofactor biosynthesis; thiamine diphosphate biosynthesis; thiamine phosphate from 4-amino-2-methyl-5-diphosphomethylpyrimidine and 4-methyl-5-(2-phosphoethyl)-thiazole: step 1/1. Its function is as follows. Condenses 4-methyl-5-(beta-hydroxyethyl)thiazole monophosphate (THZ-P) and 2-methyl-4-amino-5-hydroxymethyl pyrimidine pyrophosphate (HMP-PP) to form thiamine monophosphate (TMP). The sequence is that of Thiamine-phosphate synthase from Serratia proteamaculans (strain 568).